We begin with the raw amino-acid sequence, 88 residues long: Putative membrane protein insertion efficiency factor (88 aa).

The protein belongs to the UPF0161 family.

The protein resides in the cell inner membrane. In terms of biological role, could be involved in insertion of integral membrane proteins into the membrane. This is Putative membrane protein insertion efficiency factor from Koribacter versatilis (strain Ellin345).